The primary structure comprises 595 residues: Tyrosine-protein phosphatase cdcA (595 aa).

The segment at 32 to 57 is disordered; the sequence is TPFPYPAEQPKSPSKRRAQASPSKKR. Basic residues predominate over residues 44-57; it reads PSKRRAQASPSKKR. The region spanning 233–381 is the Tyrosine-protein phosphatase domain; sequence LPSTVSEVRS…QGSFREWWFE (149 aa). Cys-322 acts as the Phosphocysteine intermediate in catalysis. Positions 392 to 595 are disordered; it reads QPNPVTPGRS…GSPVRVKAQA (204 aa). The span at 449–461 shows a compositional bias: basic residues; that stretch reads RKSHRKDSRHHPY. Positions 471–483 are enriched in basic and acidic residues; sequence VDKDTRKTRRSTD. Over residues 502 to 526 the composition is skewed to polar residues; the sequence is SKSPAASPGQRSISYSATVTASYTL.

It belongs to the protein-tyrosine phosphatase family. Non-receptor class CDC14 subfamily.

Its subcellular location is the nucleus. It localises to the cytoplasm. The protein resides in the cell septum. The catalysed reaction is O-phospho-L-tyrosyl-[protein] + H2O = L-tyrosyl-[protein] + phosphate. Protein phosphatase which antagonizes mitotic cyclin-dependent kinase nimX, the inactivation of which is essential for exit from mitosis. To access its substrates, is released from nucleolar sequestration during mitosis. Plays an essential in coordinating the nuclear division cycle with cytokinesis through the cytokinesis checkpoint. Involved in chromosome segregation, where it is required for meiosis I spindle dissambly as well as for establishing two consecutive chromosome segregation phases. Required for the transcription of the two major endoglucanase genes eglA and eglB and growth on synthetic cellulose as the sole carbon source. In Emericella nidulans (strain FGSC A4 / ATCC 38163 / CBS 112.46 / NRRL 194 / M139) (Aspergillus nidulans), this protein is Tyrosine-protein phosphatase cdcA (cdcA).